Here is a 445-residue protein sequence, read N- to C-terminus: 8-amino-7-oxononanoate synthase (445 aa).

A substrate-binding site is contributed by Arg-40. Residue Gly-131–Tyr-132 participates in pyridoxal 5'-phosphate binding. His-156 is a binding site for substrate. Pyridoxal 5'-phosphate contacts are provided by Ser-202, His-230, and Thr-258. Position 261 is an N6-(pyridoxal phosphate)lysine (Lys-261). Thr-377 contacts substrate. A disordered region spans residues Ala-408–Ala-445.

It belongs to the class-II pyridoxal-phosphate-dependent aminotransferase family. BioF subfamily. As to quaternary structure, homodimer. Requires pyridoxal 5'-phosphate as cofactor.

The catalysed reaction is 6-carboxyhexanoyl-[ACP] + L-alanine + H(+) = (8S)-8-amino-7-oxononanoate + holo-[ACP] + CO2. Its pathway is cofactor biosynthesis; biotin biosynthesis. Its function is as follows. Catalyzes the decarboxylative condensation of pimeloyl-[acyl-carrier protein] and L-alanine to produce 8-amino-7-oxononanoate (AON), [acyl-carrier protein], and carbon dioxide. In Burkholderia ambifaria (strain MC40-6), this protein is 8-amino-7-oxononanoate synthase.